The chain runs to 102 residues: Protein Tat (102 aa).

A compositionally biased stretch (basic and acidic residues) spans 1-10 (MEPVDPRLEP). The disordered stretch occupies residues 1–20 (MEPVDPRLEPWNHPGSQPKT). The segment at 1-24 (MEPVDPRLEPWNHPGSQPKTACNK) is interaction with human CREBBP. The segment at 1 to 48 (MEPVDPRLEPWNHPGSQPKTACNKCYCKKCCYHCMCCFTKKGLGISYG) is transactivation. Residues Cys22, Cys25, and Cys27 each contribute to the Zn(2+) site. Residues 22–37 (CNKCYCKKCCYHCMCC) are cysteine-rich. Lys28 is modified (N6-acetyllysine; by host PCAF). Positions 30, 33, 34, and 37 each coordinate Zn(2+). The tract at residues 38 to 48 (FTKKGLGISYG) is core. The segment at 47–102 (YGRKKRSQRRRPPKSSKDHQDPIPEQPLSRQQPGDQTGQKKQKKALEGKTEADPCD) is disordered. A compositionally biased stretch (basic residues) spans 48–60 (GRKKRSQRRRPPK). A Nuclear localization signal, RNA-binding (TAR), and protein transduction motif is present at residues 49–57 (RKKRSQRRR). The tract at residues 49 to 87 (RKKRSQRRRPPKSSKDHQDPIPEQPLSRQQPGDQTGQKK) is interaction with the host capping enzyme RNGTT. Residues Lys50 and Lys51 each carry the N6-acetyllysine; by host EP300 and GCN5L2 modification. The residue at position 52 (Arg52) is an Asymmetric dimethylarginine; by host PRMT6. A compositionally biased stretch (polar residues) spans 74–85 (LSRQQPGDQTGQ). The span at 90-102 (KALEGKTEADPCD) shows a compositional bias: basic and acidic residues.

The protein belongs to the lentiviruses Tat family. Interacts with host CCNT1. Associates with the P-TEFb complex composed at least of Tat, P-TEFb (CDK9 and CCNT1), TAR RNA, RNA Pol II. Recruits the HATs CREBBP, TAF1/TFIID, EP300, PCAF and GCN5L2. Interacts with host KAT5/Tip60; this interaction targets the latter to degradation. Interacts with the host deacetylase SIRT1. Interacts with host capping enzyme RNGTT; this interaction stimulates RNGTT. Binds to host KDR, and to the host integrins ITGAV/ITGB3 and ITGA5/ITGB1. Interacts with host KPNB1/importin beta-1 without previous binding to KPNA1/importin alpha-1. Interacts with EIF2AK2. Interacts with host nucleosome assembly protein NAP1L1; this interaction may be required for the transport of Tat within the nucleus, since the two proteins interact at the nuclear rim. Interacts with host C1QBP/SF2P32; this interaction involves lysine-acetylated Tat. Interacts with the host chemokine receptors CCR2, CCR3 and CXCR4. Interacts with host DPP4/CD26; this interaction may trigger an anti-proliferative effect. Interacts with host LDLR. Interacts with the host extracellular matrix metalloproteinase MMP1. Interacts with host PRMT6; this interaction mediates Tat's methylation. Interacts with, and is ubiquitinated by MDM2/Hdm2. Interacts with host PSMC3 and HTATIP2. Interacts with STAB1; this interaction may overcome SATB1-mediated repression of IL2 and IL2RA (interleukin) in T cells by binding to the same domain than HDAC1. Interacts (when acetylated) with human CDK13, thereby increasing HIV-1 mRNA splicing and promoting the production of the doubly spliced HIV-1 protein Nef. Interacts with host TBP; this interaction modulates the activity of transcriptional pre-initiation complex. Interacts with host RELA. Interacts with host PLSCR1; this interaction negatively regulates Tat transactivation activity by altering its subcellular distribution. In terms of processing, asymmetrical arginine methylation by host PRMT6 seems to diminish the transactivation capacity of Tat and affects the interaction with host CCNT1. Post-translationally, acetylation by EP300, CREBBP, GCN5L2/GCN5 and PCAF regulates the transactivation activity of Tat. EP300-mediated acetylation of Lys-50 promotes dissociation of Tat from the TAR RNA through the competitive binding to PCAF's bromodomain. In addition, the non-acetylated Tat's N-terminus can also interact with PCAF. PCAF-mediated acetylation of Lys-28 enhances Tat's binding to CCNT1. Lys-50 is deacetylated by SIRT1. Polyubiquitination by host MDM2 does not target Tat to degradation, but activates its transactivation function and fosters interaction with CCNT1 and TAR RNA. In terms of processing, phosphorylated by EIF2AK2 on serine and threonine residues adjacent to the basic region important for TAR RNA binding and function. Phosphorylation of Tat by EIF2AK2 is dependent on the prior activation of EIF2AK2 by dsRNA.

The protein localises to the host nucleus. It is found in the host nucleolus. It localises to the host cytoplasm. Its subcellular location is the secreted. In terms of biological role, transcriptional activator that increases RNA Pol II processivity, thereby increasing the level of full-length viral transcripts. Recognizes a hairpin structure at the 5'-LTR of the nascent viral mRNAs referred to as the transactivation responsive RNA element (TAR) and recruits the cyclin T1-CDK9 complex (P-TEFb complex) that will in turn hyperphosphorylate the RNA polymerase II to allow efficient elongation. The CDK9 component of P-TEFb and other Tat-activated kinases hyperphosphorylate the C-terminus of RNA Pol II that becomes stabilized and much more processive. Other factors such as HTATSF1/Tat-SF1, SUPT5H/SPT5, and HTATIP2 are also important for Tat's function. Besides its effect on RNA Pol II processivity, Tat induces chromatin remodeling of proviral genes by recruiting the histone acetyltransferases (HATs) CREBBP, EP300 and PCAF to the chromatin. This also contributes to the increase in proviral transcription rate, especially when the provirus integrates in transcriptionally silent region of the host genome. To ensure maximal activation of the LTR, Tat mediates nuclear translocation of NF-kappa-B by interacting with host RELA. Through its interaction with host TBP, Tat may also modulate transcription initiation. Tat can reactivate a latently infected cell by penetrating in it and transactivating its LTR promoter. In the cytoplasm, Tat is thought to act as a translational activator of HIV-1 mRNAs. Extracellular circulating Tat can be endocytosed by surrounding uninfected cells via the binding to several surface receptors such as CD26, CXCR4, heparan sulfate proteoglycans (HSPG) or LDLR. Neurons are rarely infected, but they internalize Tat via their LDLR. Through its interaction with nuclear HATs, Tat is potentially able to control the acetylation-dependent cellular gene expression. Modulates the expression of many cellular genes involved in cell survival, proliferation or in coding for cytokines or cytokine receptors. Tat plays a role in T-cell and neurons apoptosis. Tat induced neurotoxicity and apoptosis probably contribute to neuroAIDS. Circulating Tat also acts as a chemokine-like and/or growth factor-like molecule that binds to specific receptors on the surface of the cells, affecting many cellular pathways. In the vascular system, Tat binds to ITGAV/ITGB3 and ITGA5/ITGB1 integrins dimers at the surface of endothelial cells and competes with bFGF for heparin-binding sites, leading to an excess of soluble bFGF. The protein is Protein Tat of Human immunodeficiency virus type 1 group N (isolate YBF106) (HIV-1).